The chain runs to 104 residues: Large ribosomal subunit protein uL23 (104 aa).

Belongs to the universal ribosomal protein uL23 family. In terms of assembly, part of the 50S ribosomal subunit. Contacts protein L29, and trigger factor when it is bound to the ribosome.

Functionally, one of the early assembly proteins it binds 23S rRNA. One of the proteins that surrounds the polypeptide exit tunnel on the outside of the ribosome. Forms the main docking site for trigger factor binding to the ribosome. The polypeptide is Large ribosomal subunit protein uL23 (Trichormus variabilis (strain ATCC 29413 / PCC 7937) (Anabaena variabilis)).